Consider the following 615-residue polypeptide: Melanopsin-B (615 aa).

At 1–19 the chain is on the extracellular side; sequence MDMDRGFYRKVDVPDHAHY. The chain crosses the membrane as a helical span at residues 20–40; that stretch reads VIAFFVLIIGVVGVTGNALVM. Topologically, residues 41–56 are cytoplasmic; sequence YAFLCNKKLRTPPNYF. The chain crosses the membrane as a helical span at residues 57–77; it reads IMNLAVSDFLMAITQSPIFFI. Residues 78–93 are Extracellular-facing; sequence NSLFKEWIFGETGCRM. Cys-91 and Cys-169 are disulfide-bonded. A helical membrane pass occupies residues 94–114; sequence YAFCGALFGITSMINLLAISL. Residues 115–136 are Cytoplasmic-facing; it reads DRYIVITKPPQAIRWVSGRRTM. The chain crosses the membrane as a helical span at residues 137–157; that stretch reads VVILLVWLYSLAWSLAPLLGW. Residues 158–189 lie on the Extracellular side of the membrane; sequence SSYIPEGLMTSCTWDYVTSTPANKGYTLMLCC. Residues 190–210 traverse the membrane as a helical segment; sequence FVFFIPLGIISYCYLCMFLAI. Topologically, residues 211 to 244 are cytoplasmic; the sequence is RSAGREIERLGTQVRKSTLMQQQTIKTEWKLTKV. A helical transmembrane segment spans residues 245-265; that stretch reads AFVVIIVYVHSWSPYACVTLI. At 266–279 the chain is on the extracellular side; the sequence is AWAGYGSHLSPYSK. A helical transmembrane segment spans residues 280-300; the sequence is AVPAVIAKASAIYNPFIYAII. Lys-287 carries the N6-(retinylidene)lysine modification. The Cytoplasmic segment spans residues 301–615; the sequence is HSKYRDTLAE…RNLEESFMAL (315 aa). 2 disordered regions span residues 390-420 and 465-502; these read LGRS…TVAD and NKHP…QNHP. Over residues 401-415 the composition is skewed to polar residues; that stretch reads AQQNRQTRSSDTLEQ. A compositionally biased stretch (basic residues) spans 469–478; it reads NNNHKNHNNR.

Belongs to the G-protein coupled receptor 1 family. Opsin subfamily. In terms of tissue distribution, expressed in the inner nuclear layer of the retina, possibly in amacrine and ganglion cells. Expressed in a subpopulation of neurons in the dorsal habenula.

It is found in the cell membrane. Its function is as follows. Photoreceptor implicated in non-image-forming responses to light. The protein is Melanopsin-B (opn4b) of Gadus morhua (Atlantic cod).